The sequence spans 118 residues: Holin-like protein CidA 2 (118 aa).

Transmembrane regions (helical) follow at residues 4–26 (VTLL…IQGV), 33–52 (GSLI…VLPL), 62–84 (LIVF…GSFL), and 91–113 (IFLL…SQLL).

This sequence belongs to the CidA/LrgA family. CidA subfamily.

The protein localises to the cell membrane. In terms of biological role, increases the activity of extracellular murein hydrolases possibly by mediating their export via hole formation. Inhibited by the antiholin-like proteins LrgAB. In an unstressed cell, the LrgAB products probably inhibit the function of the CidA protein. When a cell is stressed by the addition of antibiotics or by other factors in the environment, CidA possibly oligomerizes within the bacterial cell membrane, creating lesions that disrupt the proton motive force, which in turn results in loss of cell viability. These lesions are also hypothesized to regulate the subsequent cell lysis by either allowing the murein hydrolases access to the cell wall substrate and/or regulating their activity by a possible change in the cell wall pH that results from loss of membrane potential. This chain is Holin-like protein CidA 2 (cidA2), found in Bacillus cereus (strain ATCC 14579 / DSM 31 / CCUG 7414 / JCM 2152 / NBRC 15305 / NCIMB 9373 / NCTC 2599 / NRRL B-3711).